We begin with the raw amino-acid sequence, 184 residues long: MVKLADITEIIPIPEDVTVTINGSEVTVKGNGGEIKRNFNHNKITISNDEENVTVKVAFPNKKDKAMVGTIRSHISNMIYGVDHGFTYKMKIVYAHFPMTVKVQGKIVTIDNFLGERSPRKAKIIGDDVKVSVKGEDVTITGINKEHVGQTMANIEQATKIKGRDPRIFQDGIYLVDKRQEELE.

This sequence belongs to the universal ribosomal protein uL6 family. As to quaternary structure, part of the 50S ribosomal subunit.

In terms of biological role, this protein binds to the 23S rRNA, and is important in its secondary structure. It is located near the subunit interface in the base of the L7/L12 stalk, and near the tRNA binding site of the peptidyltransferase center. The chain is Large ribosomal subunit protein uL6 from Methanosphaera stadtmanae (strain ATCC 43021 / DSM 3091 / JCM 11832 / MCB-3).